A 387-amino-acid polypeptide reads, in one-letter code: MEQVVIVDAIRTPMGRSKGGAFRNVRAEDLSAHLMRSLLARNPALEAAALDDIYWGCVQQTLEQGFNIARNAALLAEVPHSVPAVTVNRLCGSSMQALHDAARMIMTGDAQAGLVGGVEHMGHVPMSHGVDFHPGLSRNVAKAAGMMGLTAEMLARMHGISREMQDAFAARSHARAWAATQSGAFKNEIIPTGGHDADGVLKQFNYDEVIRPETTVEALATLRPAFDPVSGTVTAGTSSALSDGAAAMLVMSESRARELGLKPRARVRSMAVVGCDPSIMGYGPVPASKLALKKAGLSASDIGVFEMNEAFAAQILPCIKDLGLMEQIDEKINLNGGAIALGHPLGCSGARISTTLLNLMEHKDVQFGLATMCIGLGQGIATVFERV.

The Acyl-thioester intermediate role is filled by C91. Catalysis depends on proton acceptor residues H343 and C373.

It belongs to the thiolase-like superfamily. Thiolase family. Heterotetramer of two alpha chains (FadB) and two beta chains (FadA).

It is found in the cytoplasm. The enzyme catalyses an acyl-CoA + acetyl-CoA = a 3-oxoacyl-CoA + CoA. The protein operates within lipid metabolism; fatty acid beta-oxidation. In terms of biological role, catalyzes the final step of fatty acid oxidation in which acetyl-CoA is released and the CoA ester of a fatty acid two carbons shorter is formed. This Shigella sonnei (strain Ss046) protein is 3-ketoacyl-CoA thiolase.